An 829-amino-acid polypeptide reads, in one-letter code: Periplasmic nitrate reductase (829 aa).

Residues 1-30 (MKMTRRAFVKANAAASAAAVAGITLPASAA) constitute a signal peptide (tat-type signal). The 57-residue stretch at 41–97 (ITWDKAPCRFCGTGCSVLVGTQNGKVVATQGDPEAPVNKGLNCIKGYFLSKIMYGQD) folds into the 4Fe-4S Mo/W bis-MGD-type domain. [4Fe-4S] cluster-binding residues include Cys-48, Cys-51, Cys-55, and Cys-83. Residues Lys-85, Gln-152, Asn-177, Cys-181, 214–221 (WGSNMAEM), 245–249 (STYYH), 264–266 (QSD), Met-374, Gln-378, Asn-484, 510–511 (SD), Lys-533, Asp-560, and 718–727 (TGRVLEHWHT) contribute to the Mo-bis(molybdopterin guanine dinucleotide) site. A substrate-binding site is contributed by Phe-794. Residues Asn-802 and Lys-819 each contribute to the Mo-bis(molybdopterin guanine dinucleotide) site.

It belongs to the prokaryotic molybdopterin-containing oxidoreductase family. NasA/NapA/NarB subfamily. Component of the periplasmic nitrate reductase NapAB complex composed of NapA and NapB. Requires [4Fe-4S] cluster as cofactor. The cofactor is Mo-bis(molybdopterin guanine dinucleotide). In terms of processing, predicted to be exported by the Tat system. The position of the signal peptide cleavage has not been experimentally proven.

The protein resides in the periplasm. The enzyme catalyses 2 Fe(II)-[cytochrome] + nitrate + 2 H(+) = 2 Fe(III)-[cytochrome] + nitrite + H2O. Its function is as follows. Catalytic subunit of the periplasmic nitrate reductase complex NapAB. Receives electrons from NapB and catalyzes the reduction of nitrate to nitrite. This Vibrio vulnificus (strain YJ016) protein is Periplasmic nitrate reductase.